The chain runs to 173 residues: Calcium-binding protein 5 (173 aa).

4 EF-hand domains span residues 28-63 (DEIE…MGYM), 82-99 (GRVD…KLLA), 105-140 (IGVQ…LLGD), and 142-173 (LTSQ…MMSR). The Ca(2+) site is built by D41, D43, D45, and D52. Ca(2+) contacts are provided by D118, N120, D122, E124, E129, D155, N157, D159, T161, and E166.

Interacts with CACNA1C (via C-terminal CDB motif) in a calcium-dependent manner. Interacts with STXBP1. Interacts with MYO6. As to expression, expressed in the retina (at protein level).

The protein localises to the cytoplasm. Inhibits calcium-dependent inactivation of L-type calcium channel and shifts voltage dependence of activation to more depolarized membrane potentials. Involved in the transmission of light signals. May positively regulate neurotransmitter vesicle endocytosis and exocytosis in a salt-dependent manner. May play a role in the extension and network organization of neurites. The polypeptide is Calcium-binding protein 5 (CABP5) (Bos taurus (Bovine)).